The chain runs to 145 residues: Basic phospholipase A2 GL1-1 (145 aa).

The signal sequence occupies residues 1–21 (MYPAHLLVLLAVCVSLLGASA). Residues 22-27 (IPPLPL) constitute a propeptide that is removed on maturation. Cystine bridges form between Cys-38–Cys-98, Cys-54–Cys-144, Cys-56–Cys-72, Cys-71–Cys-125, Cys-78–Cys-118, Cys-87–Cys-111, and Cys-105–Cys-116. Ca(2+)-binding residues include Tyr-55, Gly-57, and Gly-59. The active site involves His-75. Position 76 (Asp-76) interacts with Ca(2+). Asp-119 is a catalytic residue.

This sequence belongs to the phospholipase A2 family. Group I subfamily. D49 sub-subfamily. It depends on Ca(2+) as a cofactor. As to expression, expressed by the venom gland.

It is found in the secreted. It carries out the reaction a 1,2-diacyl-sn-glycero-3-phosphocholine + H2O = a 1-acyl-sn-glycero-3-phosphocholine + a fatty acid + H(+). Its function is as follows. PLA2 catalyzes the calcium-dependent hydrolysis of the 2-acyl groups in 3-sn-phosphoglycerides. The sequence is that of Basic phospholipase A2 GL1-1 from Laticauda semifasciata (Black-banded sea krait).